Reading from the N-terminus, the 205-residue chain is Probable transcription factor Ken (205 aa).

C2H2-type zinc fingers lie at residues 106-128, 134-157, and 173-196; these read YRCEYCGKQFGMSWNLKTHLRVH, FACRLCVAMFKQKAHLLKHLCSVH, and YSCCFCSMCFESVQELVRHLSGHH.

It localises to the nucleus. Functionally, probable transcription factor, which is required for terminalia development. In Drosophila yakuba (Fruit fly), this protein is Probable transcription factor Ken (ken).